A 526-amino-acid chain; its full sequence is Tyrosine-protein kinase transforming protein Src (526 aa).

The tract at residues 1 to 52 (MGSSKSKPKDPSQRRRSLEPPDSTHHGGFPASQTPDETAAPDAHRNPSRSFG) is disordered. The N-myristoyl glycine; by host moiety is linked to residue glycine 2. Residues 7–25 (KPKDPSQRRRSLEPPDSTH) are compositionally biased toward basic and acidic residues. The SH3 domain maps to 81–142 (GGVTTFVALY…PSNYVAPSDS (62 aa)). An SH2 domain is found at 148 to 245 (WYFGKITRRE…GLCHRLTNVC (98 aa)). In terms of domain architecture, Protein kinase spans 267 to 517 (LRLEAKLGQG…TFKYLQAQLL (251 aa)). ATP contacts are provided by residues 273–281 (LGQGCFGEV) and lysine 295. Aspartate 386 (proton acceptor) is an active-site residue. Position 416 is a phosphotyrosine; by autocatalysis (tyrosine 416).

This sequence belongs to the protein kinase superfamily. Tyr protein kinase family. SRC subfamily. Mn(2+) serves as cofactor. Post-translationally, the phosphorylated form is termed pp60v-src.

It catalyses the reaction L-tyrosyl-[protein] + ATP = O-phospho-L-tyrosyl-[protein] + ADP + H(+). Functionally, this phosphoprotein, required for both the initiation and the maintenance of neoplastic transformation, is a protein kinase that catalyzes the phosphorylation of tyrosine residues in vitro. The protein is Tyrosine-protein kinase transforming protein Src (V-SRC) of Gallus gallus (Chicken).